Reading from the N-terminus, the 356-residue chain is Cobalt-precorrin-5B C(1)-methyltransferase (356 aa).

This sequence belongs to the CbiD family.

It catalyses the reaction Co-precorrin-5B + S-adenosyl-L-methionine = Co-precorrin-6A + S-adenosyl-L-homocysteine. It participates in cofactor biosynthesis; adenosylcobalamin biosynthesis; cob(II)yrinate a,c-diamide from sirohydrochlorin (anaerobic route): step 6/10. Its function is as follows. Catalyzes the methylation of C-1 in cobalt-precorrin-5B to form cobalt-precorrin-6A. This Citrifermentans bemidjiense (strain ATCC BAA-1014 / DSM 16622 / JCM 12645 / Bem) (Geobacter bemidjiensis) protein is Cobalt-precorrin-5B C(1)-methyltransferase.